Consider the following 793-residue polypeptide: Serine/threonine-protein phosphatase 1 regulatory subunit GAC1 (793 aa).

Over residues M1 to S10 the composition is skewed to polar residues. The tract at residues M1–H20 is disordered. One can recognise a CBM21 domain in the interval T235–F360. Phosphoserine is present on residues S415 and S424. 2 disordered regions span residues L450–L491 and T616–H671. Residues K623 to T633 are compositionally biased toward polar residues. The segment covering P637–K648 has biased composition (basic and acidic residues). Residues S649–S665 are compositionally biased toward low complexity.

Its function is as follows. Regulates the activity of glycogen synthase. It is most probably a regulatory subunit for protein phosphatase type 1. This chain is Serine/threonine-protein phosphatase 1 regulatory subunit GAC1 (GAC1), found in Saccharomyces cerevisiae (strain ATCC 204508 / S288c) (Baker's yeast).